Reading from the N-terminus, the 1062-residue chain is MPKRTDIHKIMVIGSGPIIIGQAAEFDYSGTQACLALREEGYEVVLVNSNPATIMTDTTIADKVYIEPLTVESISRIIRQEYPDAILPTLGGQVGLNMALSLAKTGILDELNIELLGTRLSSIEQAEDREKFKELCKELGEPVPPSTTVNTVEEALEFGDRIGYPIIVRPAFTMGGTGGGICNNHEELAKIAKNGLELSPVTECLIEKSIAGYKEIEFEVMRDHDDNAMIVCCMENFDPVGIHTGDSIVFSPSQTLSDKEYQMLRDCSLRLIRALKIEGGCNVQLALDPNSFDYDVIEVNPRVSRSSALASKATGYPIAKMAAKIAIGMTLDEIKNPVTRTTYAEFEPALDYVVCKIPRWPFDKFSKADRTLSTQMKATGEVMAIGRTAEEAMQKAVRSLEIDEKDLYSETAHHASDEEIEQKLVKAQDDRLFYLAEAFRRGYSLEDVHELTKINFYFLDIVSHMVEMEKNIQENKDNLETLRLAKKYGFSDATIATLWNESIDQVRDLRKKNGIIPVYKMVDTCAAEFESKTPYFYSTYDGENESHKSGKKSVIVIGSGPIRIGQGVEFDYATVHCVKALQKMGYEAIVINSNPETVSTDFSISDKLYFEPLTLEDVLNVCDLEKPEGVIVQFGGQTSINLAAGLKDHGIKILGTSVKDLNRAEDRELFDQIIKKLKLNQPKGLTATTHEGVIKAAEELGYPVLVRPSYVLGGKAMEIVYNKSELEEYLHDHVDIAADHPILVDDYLDGRECDVDAICDGQDVLLPGIMEHIEHAGVHSGDSMAVYPPQNFTDEVKDKIMDVTRKLALTLNCVGIMNIQFIVRNGEVYVIEVNPRASRTVPFLSKITGIEMAQVATRVIMGESLAQQGYSDGLAPEPEMISVKAPVFSFSKLADVDSYLGPEMKSTGEVMGSDHTFAKALYKAFAGAKMQLPENGNVLLTIEDKDKEKILPIAKRFARIGYRIFATKGTADFLKNNGLHVDLVTKVHESENADDNILNELREGRIDLVINTMGHDIEKNSDGFIIRQMAIQQNVPLLTALDTADALLTSLENRSFATDALK.

The segment at 1 to 401 is carboxyphosphate synthetic domain; that stretch reads MPKRTDIHKI…AMQKAVRSLE (401 aa). Residues arginine 129, arginine 169, glycine 175, glycine 176, lysine 208, isoleucine 210, glutamate 215, glycine 241, isoleucine 242, histidine 243, glutamine 284, and glutamate 298 each contribute to the ATP site. One can recognise an ATP-grasp 1 domain in the interval 133–327; it reads KELCKELGEP…IAKMAAKIAI (195 aa). Glutamine 284, glutamate 298, and asparagine 300 together coordinate Mg(2+). The Mn(2+) site is built by glutamine 284, glutamate 298, and asparagine 300. Positions 402-546 are oligomerization domain; the sequence is IDEKDLYSET…YSTYDGENES (145 aa). A carbamoyl phosphate synthetic domain region spans residues 547–929; that stretch reads HKSGKKSVIV…ALYKAFAGAK (383 aa). The 191-residue stretch at 671-861 folds into the ATP-grasp 2 domain; that stretch reads DQIIKKLKLN…MAQVATRVIM (191 aa). ATP-binding residues include arginine 707, aspartate 746, leucine 748, glutamate 752, glycine 777, valine 778, histidine 779, serine 780, glutamine 820, and glutamate 832. Mg(2+) is bound by residues glutamine 820, glutamate 832, and asparagine 834. Glutamine 820, glutamate 832, and asparagine 834 together coordinate Mn(2+). The MGS-like domain maps to 930–1062; sequence MQLPENGNVL…NRSFATDALK (133 aa). Residues 930–1062 form an allosteric domain region; that stretch reads MQLPENGNVL…NRSFATDALK (133 aa).

This sequence belongs to the CarB family. In terms of assembly, composed of two chains; the small (or glutamine) chain promotes the hydrolysis of glutamine to ammonia, which is used by the large (or ammonia) chain to synthesize carbamoyl phosphate. Tetramer of heterodimers (alpha,beta)4. Mg(2+) serves as cofactor. Mn(2+) is required as a cofactor.

It carries out the reaction hydrogencarbonate + L-glutamine + 2 ATP + H2O = carbamoyl phosphate + L-glutamate + 2 ADP + phosphate + 2 H(+). It catalyses the reaction hydrogencarbonate + NH4(+) + 2 ATP = carbamoyl phosphate + 2 ADP + phosphate + 2 H(+). The protein operates within amino-acid biosynthesis; L-arginine biosynthesis; carbamoyl phosphate from bicarbonate: step 1/1. It functions in the pathway pyrimidine metabolism; UMP biosynthesis via de novo pathway; (S)-dihydroorotate from bicarbonate: step 1/3. In terms of biological role, large subunit of the glutamine-dependent carbamoyl phosphate synthetase (CPSase). CPSase catalyzes the formation of carbamoyl phosphate from the ammonia moiety of glutamine, carbonate, and phosphate donated by ATP, constituting the first step of 2 biosynthetic pathways, one leading to arginine and/or urea and the other to pyrimidine nucleotides. The large subunit (synthetase) binds the substrates ammonia (free or transferred from glutamine from the small subunit), hydrogencarbonate and ATP and carries out an ATP-coupled ligase reaction, activating hydrogencarbonate by forming carboxy phosphate which reacts with ammonia to form carbamoyl phosphate. The protein is Carbamoyl phosphate synthase large chain of Lactobacillus johnsonii (strain CNCM I-12250 / La1 / NCC 533).